Reading from the N-terminus, the 471-residue chain is Adenosylhomocysteinase (471 aa).

3 residues coordinate substrate: Thr60, Asp135, and Glu196. 197 to 199 lines the NAD(+) pocket; sequence TTT. Substrate contacts are provided by Lys226 and Asp230. Residues Asn231, 260-265, Glu283, Asn318, 339-341, and Asn387 each bind NAD(+); these read GYGDVG and IGH.

The protein belongs to the adenosylhomocysteinase family. NAD(+) is required as a cofactor.

The protein resides in the cytoplasm. The enzyme catalyses S-adenosyl-L-homocysteine + H2O = L-homocysteine + adenosine. It functions in the pathway amino-acid biosynthesis; L-homocysteine biosynthesis; L-homocysteine from S-adenosyl-L-homocysteine: step 1/1. Functionally, may play a key role in the regulation of the intracellular concentration of adenosylhomocysteine. This Chlorobium limicola (strain DSM 245 / NBRC 103803 / 6330) protein is Adenosylhomocysteinase.